Reading from the N-terminus, the 333-residue chain is DNA repair and recombination protein RadA (333 aa).

127-134 (GEFGSGKT) serves as a coordination point for ATP.

It belongs to the eukaryotic RecA-like protein family.

Functionally, involved in DNA repair and in homologous recombination. Binds and assemble on single-stranded DNA to form a nucleoprotein filament. Hydrolyzes ATP in a ssDNA-dependent manner and promotes DNA strand exchange between homologous DNA molecules. The polypeptide is DNA repair and recombination protein RadA (Pyrobaculum aerophilum (strain ATCC 51768 / DSM 7523 / JCM 9630 / CIP 104966 / NBRC 100827 / IM2)).